The primary structure comprises 116 residues: PTS system galactose-specific EIIA component (116 aa).

The PTS EIIA type-3 domain occupies 11–109 (DDYMGVVMGI…AVEVVGQERR (99 aa)). The active-site Tele-phosphohistidine intermediate is His-85. His-85 is modified (phosphohistidine; by HPr). A Mg(2+)-binding site is contributed by Asp-88.

Homotrimer. The cofactor is Mg(2+).

Functionally, the phosphoenolpyruvate-dependent sugar phosphotransferase system (sugar PTS), a major carbohydrate active transport system, catalyzes the phosphorylation of incoming sugar substrates concomitantly with their translocation across the cell membrane. Involved in galactose transport with PtcB and Lmg_0963. The chain is PTS system galactose-specific EIIA component from Lactococcus lactis subsp. cremoris (strain MG1363).